Reading from the N-terminus, the 539-residue chain is Phosphoenolpyruvate carboxykinase (ATP) (539 aa).

Substrate is bound by residues Arg-59, Tyr-200, and Lys-206. Residues Lys-206, His-225, and 242-250 each bind ATP; that span reads GLSGTGKTT. Residues Lys-206 and His-225 each contribute to the Mn(2+) site. Residue Asp-263 coordinates Mn(2+). ATP contacts are provided by residues Glu-291, Arg-327, 447-448, and Thr-453; that span reads RI. A substrate-binding site is contributed by Arg-327.

This sequence belongs to the phosphoenolpyruvate carboxykinase (ATP) family. It depends on Mn(2+) as a cofactor.

The protein localises to the cytoplasm. The catalysed reaction is oxaloacetate + ATP = phosphoenolpyruvate + ADP + CO2. It participates in carbohydrate biosynthesis; gluconeogenesis. Its function is as follows. Involved in the gluconeogenesis. Catalyzes the conversion of oxaloacetate (OAA) to phosphoenolpyruvate (PEP) through direct phosphoryl transfer between the nucleoside triphosphate and OAA. The protein is Phosphoenolpyruvate carboxykinase (ATP) of Selenomonas ruminantium.